We begin with the raw amino-acid sequence, 195 residues long: Dephospho-CoA kinase (195 aa).

The DPCK domain occupies 3–195 (KIGLTGGIGS…ANMKNVIAEI (193 aa)). Residue 11-16 (GSGKST) coordinates ATP.

It belongs to the CoaE family.

It localises to the cytoplasm. It catalyses the reaction 3'-dephospho-CoA + ATP = ADP + CoA + H(+). It participates in cofactor biosynthesis; coenzyme A biosynthesis; CoA from (R)-pantothenate: step 5/5. In terms of biological role, catalyzes the phosphorylation of the 3'-hydroxyl group of dephosphocoenzyme A to form coenzyme A. This is Dephospho-CoA kinase from Corynebacterium glutamicum (Brevibacterium saccharolyticum).